The sequence spans 62 residues: MATKLKITWVKSAIGYAKNQKLTVATLGLKKLHQSVLHDDTPAIRGMIRTVNHLVTVEEVEA.

It belongs to the universal ribosomal protein uL30 family. Part of the 50S ribosomal subunit.

This chain is Large ribosomal subunit protein uL30, found in Heliobacterium modesticaldum (strain ATCC 51547 / Ice1).